We begin with the raw amino-acid sequence, 162 residues long: Auxin-responsive protein SAUR36 (162 aa).

It belongs to the ARG7 family. Expressed in embryo, endosperm, growing hypocotyls and shoot apical meristems.

Functionally, acts a positive regulator of leaf senescence and may mediate auxin-induced leaf senescence. Plays a role in the regulation of seed germination by gibberellins and abscisic acid (ABA). Plays a role in the regulation of light-dependent hypocotyl elongation. The polypeptide is Auxin-responsive protein SAUR36 (Arabidopsis thaliana (Mouse-ear cress)).